The following is a 473-amino-acid chain: Cysteine--tRNA ligase (473 aa).

Cys-29 contacts Zn(2+). Residues 31-41 carry the 'HIGH' region motif; the sequence is PTVYDRAHLGN. 3 residues coordinate Zn(2+): Cys-225, His-250, and Glu-254. The 'KMSKS' region motif lies at 281–285; it reads KMSKS. Position 284 (Lys-284) interacts with ATP.

The protein belongs to the class-I aminoacyl-tRNA synthetase family. As to quaternary structure, monomer. Requires Zn(2+) as cofactor.

Its subcellular location is the cytoplasm. It carries out the reaction tRNA(Cys) + L-cysteine + ATP = L-cysteinyl-tRNA(Cys) + AMP + diphosphate. The sequence is that of Cysteine--tRNA ligase from Roseobacter denitrificans (strain ATCC 33942 / OCh 114) (Erythrobacter sp. (strain OCh 114)).